We begin with the raw amino-acid sequence, 327 residues long: uncharacterized protein (327 aa).

The signal sequence occupies residues 1 to 24 (MAMACLCLANISWATVCANSTGVA).

This sequence belongs to the fimbrial protein family.

It localises to the fimbrium. Functionally, part of the sfmACDHF fimbrial operon. Could contribute to adhesion to various surfaces in specific environmental niches. Increases adhesion to eukaryotic T24 bladder epithelial cells in the absence of fim genes. This is an uncharacterized protein from Escherichia coli (strain K12).